Here is a 596-residue protein sequence, read N- to C-terminus: ATP-dependent lipid A-core flippase (596 aa).

Transmembrane regions (helical) follow at residues 34–54, 80–100, 138–158, 164–184, 263–283, and 292–312; these read VWVLVAGVLAMAAVAATEAGI, AAVVGLALARAIAQYASGYLL, AVVFEVNQVLSVLMGVTITLV, VVFLLGYLFYLNWRLTLIVAI, QPLTQFLASIALAVVLTIAVV, and VGGFVAFVTAMLLIISPLKHL. An ABC transmembrane type-1 domain is found at 38–321; sequence VAGVLAMAAV…LMDVNQPLQR (284 aa). Residues 353-589 enclose the ABC transporter domain; that stretch reads IEFSHVSFSY…GGLYAHLHRI (237 aa). 389–396 is a binding site for ATP; that stretch reads GPSGSGKT.

This sequence belongs to the ABC transporter superfamily. Lipid exporter (TC 3.A.1.106) family. As to quaternary structure, homodimer.

The protein resides in the cell inner membrane. The enzyme catalyses ATP + H2O + lipid A-core oligosaccharideSide 1 = ADP + phosphate + lipid A-core oligosaccharideSide 2.. Its function is as follows. Involved in lipopolysaccharide (LPS) biosynthesis. Translocates lipid A-core from the inner to the outer leaflet of the inner membrane. Transmembrane domains (TMD) form a pore in the inner membrane and the ATP-binding domain (NBD) is responsible for energy generation. This is ATP-dependent lipid A-core flippase from Burkholderia mallei (strain ATCC 23344).